Consider the following 143-residue polypeptide: Nucleoside diphosphate kinase (143 aa).

ATP contacts are provided by Lys-11, Phe-59, Arg-87, Thr-93, Arg-104, and Asn-114. His-117 serves as the catalytic Pros-phosphohistidine intermediate.

The protein belongs to the NDK family. Homotetramer. Mg(2+) serves as cofactor.

The protein resides in the cytoplasm. The enzyme catalyses a 2'-deoxyribonucleoside 5'-diphosphate + ATP = a 2'-deoxyribonucleoside 5'-triphosphate + ADP. It catalyses the reaction a ribonucleoside 5'-diphosphate + ATP = a ribonucleoside 5'-triphosphate + ADP. Its function is as follows. Major role in the synthesis of nucleoside triphosphates other than ATP. The ATP gamma phosphate is transferred to the NDP beta phosphate via a ping-pong mechanism, using a phosphorylated active-site intermediate. The chain is Nucleoside diphosphate kinase from Colwellia psychrerythraea (strain 34H / ATCC BAA-681) (Vibrio psychroerythus).